Reading from the N-terminus, the 355-residue chain is Protein RecA (355 aa).

65 to 72 (GPESSGKT) is a binding site for ATP.

This sequence belongs to the RecA family.

The protein resides in the cytoplasm. Its function is as follows. Can catalyze the hydrolysis of ATP in the presence of single-stranded DNA, the ATP-dependent uptake of single-stranded DNA by duplex DNA, and the ATP-dependent hybridization of homologous single-stranded DNAs. It interacts with LexA causing its activation and leading to its autocatalytic cleavage. In Pseudomonas entomophila (strain L48), this protein is Protein RecA.